We begin with the raw amino-acid sequence, 306 residues long: Tricarboxylate transporter FUM11 (306 aa).

Solcar repeat units lie at residues S18 to L98, F109 to V195, and I206 to G292. The next 6 helical transmembrane spans lie at L24 to A44, G67 to I87, L113 to I133, G170 to Y189, V209 to L229, and G267 to Y286.

The protein belongs to the mitochondrial carrier (TC 2.A.29) family.

Its subcellular location is the mitochondrion inner membrane. It participates in mycotoxin biosynthesis. Its function is as follows. Tricarboxylate transporter; part of the gene cluster that mediates the biosynthesis of fumonisins B1 (FB1), B2 (FB2), B3 (FB3), and B4 (FB4), which are carcinogenic mycotoxins. Within the pathway, FUM11 is involved the addition of the tricarballylic moieties to the carbon backbone. FUM11 makes a tricarboxylic acid precursor available for fumonisin biosynthesis via its export from the mitochondria. The biosynthesis starts with the FUM1-catalyzed carbon chain assembly from one molecule of acetyl-CoA, eight molecules of malonyl-CoA, and two molecules of methionine (in S-adenosyl form). The C18 polyketide chain is released from the enzyme by a nucleophilic attack of a carbanion, which is derived from R-carbon of alanine by decarboxylation, on the carbonyl carbon of polyketide acyl chain. This step is catalyzed by the pyridoxal 5'-phosphate-dependent aminoacyl transferase FUM8. The resultant 3-keto intermediate is then stereospecifically reduced to a 3-hydroxyl product by reductase FUM13. Subsequent oxidations at C-10 by the cytochrome P450 monooxygenase FUM2, C-14 and C-15 by FUM6, FUM12 or FUM15, tricarballylic esterification of the hydroxyl groups on C-14 and C-15 by acyltransferase FUM14, and C-5 hydroxylation by 2-keto-glutarate-dependent dioxygenase FUM3 furnish the biosynthesis of fumonisins. The tricarballylic moieties are most likely derived from the citric acid cycle, and their addition to the carbon backbone may involve FUM7, FUM10, FUM11 and FUM14. In Gibberella moniliformis (strain M3125 / FGSC 7600) (Maize ear and stalk rot fungus), this protein is Tricarboxylate transporter FUM11.